The primary structure comprises 369 residues: RNA-binding protein rnp24 (369 aa).

Disordered stretches follow at residues 1-77 (MEPI…KKKE), 200-219 (TDFSGRPSKPANTLSKTASI), and 304-369 (RMRN…IKFD). The region spanning 105-206 (WGIWVGNLSF…KSNTDFSGRP (102 aa)) is the RRM 1 domain. The span at 209-219 (PANTLSKTASI) shows a compositional bias: polar residues. In terms of domain architecture, RRM 2 spans 228 to 310 (SILFVGNLDF…RSKRMRNKSP (83 aa)). Residues 325–341 (QEDKPNFKRARKIDPRS) are compositionally biased toward basic and acidic residues. A compositionally biased stretch (low complexity) spans 346–357 (AALAKAQRSSAA).

Its subcellular location is the nucleus. This chain is RNA-binding protein rnp24 (rnp24), found in Schizosaccharomyces pombe (strain 972 / ATCC 24843) (Fission yeast).